Consider the following 510-residue polypeptide: 2,3-bisphosphoglycerate-independent phosphoglycerate mutase (510 aa).

Residues D13 and S63 each coordinate Mn(2+). S63 serves as the catalytic Phosphoserine intermediate. Residues H124, 154 to 155 (RD), R186, R192, 262 to 265 (RADR), and K334 contribute to the substrate site. Positions 401, 405, 442, 443, and 461 each coordinate Mn(2+).

The protein belongs to the BPG-independent phosphoglycerate mutase family. In terms of assembly, monomer. Mn(2+) serves as cofactor.

It catalyses the reaction (2R)-2-phosphoglycerate = (2R)-3-phosphoglycerate. Its pathway is carbohydrate degradation; glycolysis; pyruvate from D-glyceraldehyde 3-phosphate: step 3/5. In terms of biological role, catalyzes the interconversion of 2-phosphoglycerate and 3-phosphoglycerate. The protein is 2,3-bisphosphoglycerate-independent phosphoglycerate mutase of Vibrio campbellii (strain ATCC BAA-1116).